A 134-amino-acid polypeptide reads, in one-letter code: Ribonuclease VapC11 (134 aa).

The 125-residue stretch at 2–126 (ILIDTSAWVE…ADFDVIARIT (125 aa)) folds into the PINc domain. Positions 5 and 98 each coordinate Mg(2+).

Belongs to the PINc/VapC protein family. Mg(2+) is required as a cofactor.

Its function is as follows. Toxic component of a type II toxin-antitoxin (TA) system. Acts as an RNase. Its toxic effects on cell growth and colony formation are neutralized by coexpression with cognate antitoxin VapB11. The polypeptide is Ribonuclease VapC11 (Mycobacterium tuberculosis (strain CDC 1551 / Oshkosh)).